The following is a 580-amino-acid chain: Glypican-3 (580 aa).

An N-terminal signal peptide occupies residues 1–24 (MAGTVRTACLVVAMLLSLDFPGQA). Glutamine 25 is modified (pyrrolidone carboxylic acid). Disulfide bonds link cysteine 35–cysteine 72, cysteine 65–cysteine 262, cysteine 73–cysteine 265, cysteine 197–cysteine 349, cysteine 252–cysteine 285, cysteine 274–cysteine 422, and cysteine 278–cysteine 410. Asparagine 124 and asparagine 241 each carry an N-linked (GlcNAc...) asparagine glycan. The residue at position 352 (serine 352) is a Phosphoserine; by FAM20C. An N-linked (GlcNAc...) asparagine glycan is attached at asparagine 418. O-linked (Xyl...) (glycosaminoglycan) serine glycans are attached at residues serine 495 and serine 509. Asparagine 554 carries GPI-anchor amidated asparagine lipidation. A propeptide spans 555–580 (LGNVHSPLKLLTSMAISVVCFFFLVH) (removed in mature form).

Belongs to the glypican family. In terms of assembly, heterodimer; disulfide-linked. Cleavage by a furin-like convertase results in production of alpha and beta chains which form a disulfide-linked heterodimer. Interacts with DPP4. Interacts with FGF2. Interacts with WNT5A. Also interacts with WNT3A and WNT7B. Interacts with hedgehog protein SHH; the heparan sulfate chains are not required for the interaction. Also interacts with hedgehog protein IHH. Interacts with CD81. Interacts with Wnt receptors FZD4, FZD7 and FZD8; the heparan sulfate chains are required for the interaction. O-glycosylated; contains heparan sulfate and/or chondroitin sulfate. Post-translationally, cleaved intracellularly by a furin-like convertase to generate 2 subunits, alpha and beta, which remain associated through disulfide bonds and are associated with the cell surface via the GPI-anchor. This processing is essential for its role in inhibition of hedgehog signaling. A second proteolytic event may result in cleavage of the protein on the cell surface, separating it from the GPI-anchor and leading to its shedding from the cell surface. Detected in placenta (at protein level). Highly expressed in lung, liver and kidney.

It is found in the cell membrane. In terms of biological role, cell surface proteoglycan. Negatively regulates the hedgehog signaling pathway when attached via the GPI-anchor to the cell surface by competing with the hedgehog receptor PTC1 for binding to hedgehog proteins. Binding to the hedgehog protein SHH triggers internalization of the complex by endocytosis and its subsequent lysosomal degradation. Positively regulates the canonical Wnt signaling pathway by binding to the Wnt receptor Frizzled and stimulating the binding of the Frizzled receptor to Wnt ligands. Positively regulates the non-canonical Wnt signaling pathway. Binds to CD81 which decreases the availability of free CD81 for binding to the transcriptional repressor HHEX, resulting in nuclear translocation of HHEX and transcriptional repression. Inhibits the dipeptidyl peptidase activity of DPP4. Plays a role in limb patterning and skeletal development by controlling the cellular response to BMP4. Modulates the effects of growth factors BMP2, BMP7 and FGF7 on renal branching morphogenesis. Required for coronary vascular development. Plays a role in regulating cell movements during gastrulation. This is Glypican-3 (GPC3) from Homo sapiens (Human).